The sequence spans 301 residues: L-threonate dehydrogenase (301 aa).

NAD(+)-binding positions include 6–34 (YSVA…TYGI) and Thr-101. Lys-177 is a catalytic residue. Lys-245 is a binding site for NAD(+).

This sequence belongs to the HIBADH-related family. L-threonate dehydrogenase subfamily.

The enzyme catalyses L-threonate + NAD(+) = 2-dehydro-L-erythronate + NADH + H(+). Catalyzes oxidation of L-threonate to 2-oxo-tetronate. Can use either NAD(+) or NADP(+) as cosubstrate, with a preference for NAD(+). The sequence is that of L-threonate dehydrogenase from Haemophilus influenzae (strain ATCC 51907 / DSM 11121 / KW20 / Rd).